Consider the following 339-residue polypeptide: DNA-directed RNA polymerase subunit alpha (339 aa).

Positions 1 to 233 (MVREEVAGST…DLFLPFLHAE (233 aa)) are alpha N-terminal domain (alpha-NTD). Residues 264–339 (KKGIPLNCIF…IDLLKNKLSF (76 aa)) form an alpha C-terminal domain (alpha-CTD) region.

It belongs to the RNA polymerase alpha chain family. In plastids the minimal PEP RNA polymerase catalytic core is composed of four subunits: alpha, beta, beta', and beta''. When a (nuclear-encoded) sigma factor is associated with the core the holoenzyme is formed, which can initiate transcription.

It is found in the plastid. The protein resides in the chloroplast. The catalysed reaction is RNA(n) + a ribonucleoside 5'-triphosphate = RNA(n+1) + diphosphate. In terms of biological role, DNA-dependent RNA polymerase catalyzes the transcription of DNA into RNA using the four ribonucleoside triphosphates as substrates. The sequence is that of DNA-directed RNA polymerase subunit alpha from Bromus inermis (Smooth brome grass).